The sequence spans 227 residues: Thymidylate synthase (227 aa).

Residue 89 to 90 (RR) coordinates dUMP. Cysteine 109 (nucleophile) is an active-site residue. DUMP-binding positions include 129–132 (RSND), asparagine 140, and 170–172 (HVY). Aspartate 132 contacts (6R)-5,10-methylene-5,6,7,8-tetrahydrofolate.

Belongs to the thymidylate synthase family. Bacterial-type ThyA subfamily. Homodimer.

It is found in the cytoplasm. The catalysed reaction is dUMP + (6R)-5,10-methylene-5,6,7,8-tetrahydrofolate = 7,8-dihydrofolate + dTMP. It functions in the pathway pyrimidine metabolism; dTTP biosynthesis. Its function is as follows. Catalyzes the reductive methylation of 2'-deoxyuridine-5'-monophosphate (dUMP) to 2'-deoxythymidine-5'-monophosphate (dTMP) while utilizing 5,10-methylenetetrahydrofolate (mTHF) as the methyl donor and reductant in the reaction, yielding dihydrofolate (DHF) as a by-product. This enzymatic reaction provides an intracellular de novo source of dTMP, an essential precursor for DNA biosynthesis. The chain is Thymidylate synthase from Bacillus atrophaeus.